The sequence spans 390 residues: Pepsin B (390 aa).

Residues 1 to 16 form the signal peptide; it reads MKIQVLVLVCLHLSEG. Positions 17–59 are cleaved as a propeptide — activation peptide; that stretch reads VERIILKKGKSIRQVMEERGVLETFLRNHPKVDPAAKYLFNND. The region spanning 74 to 387 is the Peptidase A1 domain; the sequence is YFGEISIGTP…DMAANRVGFA (314 aa). Aspartate 92 is a catalytic residue. Disulfide bonds link cysteine 105–cysteine 110 and cysteine 269–cysteine 273. Aspartate 278 is an active-site residue. Cysteine 312 and cysteine 345 form a disulfide bridge.

The protein belongs to the peptidase A1 family.

The protein resides in the secreted. The catalysed reaction is Degradation of gelatin, little activity on hemoglobin. Specificity on B chain of insulin more restricted than that of pepsin A. Does not cleave 1-Phe-|-Val-2, 4-Gln-|-His-5 or 23-Gly-|-Phe-24.. In terms of biological role, hydrolyzes various peptides including beta-endorphin, insulin B chain, dynorphin A, and neurokinin A, with high specificity for the cleavage of the Phe-Xaa bonds. This Canis lupus familiaris (Dog) protein is Pepsin B (PGB).